Consider the following 516-residue polypeptide: Nucleolar complex protein 4 homolog (516 aa).

The next 3 membrane-spanning stretches (helical) occupy residues 296–316 (SACD…FILI), 347–367 (FFHL…LVAA), and 375–395 (LALT…CNLL).

Belongs to the CBF/MAK21 family.

It is found in the nucleus membrane. The protein localises to the nucleus. It localises to the nucleolus. This chain is Nucleolar complex protein 4 homolog (Noc4l), found in Mus musculus (Mouse).